The sequence spans 573 residues: Cytochrome P450 monooxygenase GME11363 (573 aa).

The chain crosses the membrane as a helical span at residues 10–30 (IGVVAAVLLAALILLYRAALP). Heme is bound at residue Cys519.

It belongs to the cytochrome P450 family. Heme serves as cofactor.

Its subcellular location is the membrane. It participates in secondary metabolite biosynthesis. In terms of biological role, cytochrome P450 monooxygenase; part of the gene cluster that mediates the biosynthesis of dibenzodioxocinones such as pestalotiollide B, a novel class of inhibitors against cholesterol ester transfer protein (CEPT). The biosynthesis initiates from condensation of acetate and malonate units catalyzed by the non-reducing PKS pks8/GME11356. Pks8/GME11356 lacks a thioesterase (TE) domain, which is important to the cyclizing of the third ring of atrochrysone carboxylic acid, and the esterase GME11355 might play the role of TE and catalyzes the cyclization reaction of the C ring. The lactamase-like protein GME11357 (or other beta-lactamases in Pestalotiopsis microspora) probably hydrolyzes the thioester bond between the ACP of pks8/GME11356 and the intermediate to release atrochrysone carboxylic acid, which is spontaneously dehydrates to form endocrocin anthrone. Endocrocin anthrone is further converted to emodin via the endocrocin intermediate. Emodin is then oxidized by several enzymes such as the Baeyer-Villiger oxidase GME11358, the oxidoreductase GME11367, the short chain dehydrogenase/reductase GME11373, as well as by other oxidoreductases from the cluster, to modify the A and C rings and open the B ring, and finally yield monodictyphenone. The prenyltransferase GME11375 may catalyze the addition reaction between the C5 side chains and the carbon bone of dibenzodioxocinones. The remaining biochemical reactions to the final product dibenzodioxocinones should be methylation catalyzed by methyltransferase GME11366 and reduction and lactonization reaction catalyzed by a series of oxidordeuctases. This chain is Cytochrome P450 monooxygenase GME11363, found in Pestalotiopsis microspora.